The following is a 962-amino-acid chain: MSNTTVEQFAAELKRPVEDLLKQLKEAGVSKNSGSDSLTLDDKQLLNAYLTKKNGSNGGTISIRRTKTEVSTVDGVKVETRKRGRTVNIPSAEELAAQVKAAQTQAAPVRPEQTAEDAAKARAEAATRAEARAKAEAEAAKLKAAKAGNKAKPAAQKPTEAKAETAPVAAETKPAEESKAEKAQADKMPSKKPAEPKEKAAKPKHERNGKGKDAKKPAKPAAPAVPQPVVSAEEQAQRDEEARRAAALRAHQEALLKEKQERQARREAMKQQAEQQAKAAQEAKTGRQRPAKPAEKPQAAAPAVENKPVNPAKAKKENRRNRDDEGQGRNAKGKGGKGGRDRNNARNGDDERVRGSKKGKKLKLEPNQHAFQAPTEPVVHEVLVPETITVADLAHKMAVKGVEVVKALMKMGMMVTINQSIDQDTALIVVEELGHIGKPAAADDPEAFLDEGAEAVEAEALPRPPVVTVMGHVDHGKTSLLDYIRRAKVVQGEAGGITQHIGAYHVKTPRGVITFLDTPGHEAFTAMRARGAKATDIVILVVAADDGVMPQTIEAIAHAKAAGVPMVVAVNKIDKEAANPERIRQELTAHEVVPDEWGGDVQFIDVSAKKGLNIDALLEAVLLEAEVLELTAPVDAPAKGIIVEARLDKGRGAVATLLVQSGTLKKGDMLLAGTAFGKIRAMVDENGKAINEAGPSIPVEILGLSDVPNAGEDAMVLADEKKAREIALFRQGKYRDVRLAKQQAAKLENMFNNMGETQAQSLSVIIKADVQGSYEALAGSLKKLSTDEVKVDVLHSGVGGITESDVNLAIASGAFIIGFNVRADASSRKLAENENVEIRYYNIIYDAIDDVKAAMSGMLSPEEKEQVTGTVEIRQVISVSKVGNIAGCMVTDGVVKRDSHARLIRNNVVIHTGELSSLKRYKDDVKEVRMGFECGLMIKGYNEIMEGDQLECFDIVEVARTL.

The disordered stretch occupies residues Ala101–Pro366. The segment covering Asp117 to Lys141 has biased composition (basic and acidic residues). Over residues Ala145 to Lys157 the composition is skewed to low complexity. Residues Lys173–Lys216 show a composition bias toward basic and acidic residues. A compositionally biased stretch (low complexity) spans Lys219–Glu234. A compositionally biased stretch (basic and acidic residues) spans Gln235 to Met269. Low complexity predominate over residues Lys270–Ala283. Over residues Gly338 to Arg354 the composition is skewed to basic and acidic residues. In terms of domain architecture, tr-type G spans Pro462–Thr631. A G1 region spans residues Gly471–Thr478. Residue Gly471–Thr478 coordinates GTP. A G2 region spans residues Gly496 to His500. Residues Asp517–Gly520 form a G3 region. GTP is bound by residues Asp517–His521 and Asn571–Asp574. The G4 stretch occupies residues Asn571 to Asp574. The segment at Ser607 to Lys609 is G5.

Belongs to the TRAFAC class translation factor GTPase superfamily. Classic translation factor GTPase family. IF-2 subfamily.

The protein localises to the cytoplasm. Functionally, one of the essential components for the initiation of protein synthesis. Protects formylmethionyl-tRNA from spontaneous hydrolysis and promotes its binding to the 30S ribosomal subunits. Also involved in the hydrolysis of GTP during the formation of the 70S ribosomal complex. The sequence is that of Translation initiation factor IF-2 from Neisseria meningitidis serogroup A / serotype 4A (strain DSM 15465 / Z2491).